A 1258-amino-acid polypeptide reads, in one-letter code: Cohesin subunit SA-1 (1258 aa).

Positions 1 to 84 (MITSELPVLQ…HPQQNGEGEP (84 aa)) are disordered. The segment covering 10–19 (QDSTNETTAH) has biased composition (polar residues). Residue serine 24 is modified to Phosphoserine. Residues 53-62 (SPGEKSRIEA) show a composition bias toward basic and acidic residues. An SCD domain is found at 296–381 (FVHRYRDAIA…NRFKDRIVSM (86 aa)). Phosphoserine occurs at positions 756, 1062, and 1065. 2 disordered regions span residues 1055–1096 (GGED…SLDN) and 1129–1148 (MGDQ…DFLH). Residues 1062-1074 (SVNSGSSSSKTSS) are compositionally biased toward low complexity. The segment covering 1076-1087 (RNKKGRPPLHKK) has biased composition (basic residues). Position 1093 is a phosphoserine (serine 1093). The span at 1137-1146 (ESEHGSEPDF) shows a compositional bias: basic and acidic residues. Lysine 1161 participates in a covalent cross-link: Glycyl lysine isopeptide (Lys-Gly) (interchain with G-Cter in SUMO2).

The protein belongs to the SCC3 family. In terms of assembly, cohesin complexes are composed of a heterodimer between a SMC1 protein (SMC1A or SMC1B) and SMC3, which are attached via their hinge domain, and RAD21 which link them at their heads, and one STAG protein (STAG1, STAG2 or STAG3). In cohesin complexes, STAG1 is mutually exclusive with STAG2 and STAG3. Interacts directly with RAD21 in cohesin complex. The cohesin complex interacts with the cohesin loading complex subunits NIPBL/Scc2 (via HEAT repeats) and MAU2/Scc4. NIPBL directly contacts all members of the complex, RAD21, SMC1A/B, SMC3 and STAG1. Post-translationally, phosphorylated by PLK1. The large dissociation of cohesin from chromosome arms during prophase is partly due to its phosphorylation.

Its subcellular location is the nucleus. It is found in the chromosome. It localises to the centromere. In terms of biological role, component of cohesin complex, a complex required for the cohesion of sister chromatids after DNA replication. The cohesin complex apparently forms a large proteinaceous ring within which sister chromatids can be trapped. At anaphase, the complex is cleaved and dissociates from chromatin, allowing sister chromatids to segregate. The cohesin complex may also play a role in spindle pole assembly during mitosis. This Homo sapiens (Human) protein is Cohesin subunit SA-1 (STAG1).